The chain runs to 175 residues: Co-chaperone protein HscB homolog (175 aa).

Residues 7-79 (SHFDLFDLPA…LKRATYLLHL (73 aa)) form the J domain.

The protein belongs to the HscB family. In terms of assembly, interacts with HscA and stimulates its ATPase activity.

Co-chaperone involved in the maturation of iron-sulfur cluster-containing proteins. Seems to help targeting proteins to be folded toward HscA. The chain is Co-chaperone protein HscB homolog from Paraburkholderia phytofirmans (strain DSM 17436 / LMG 22146 / PsJN) (Burkholderia phytofirmans).